An 840-amino-acid chain; its full sequence is Phosphatidylglycerol lysyltransferase (840 aa).

The Cytoplasmic portion of the chain corresponds to 1–8 (MNQEVKNK). Residues 9-29 (IFSILKITFATALFIFVAITL) traverse the membrane as a helical segment. Residues 30 to 52 (YRELSGINFKDTLVEFSKINRMS) lie on the Extracellular side of the membrane. A helical transmembrane segment spans residues 53-73 (LVLLFIGGGASLVILSMYDVI). The Cytoplasmic segment spans residues 74–89 (LSRALKMDISLGKVLR). A helical membrane pass occupies residues 90–110 (VSYIINALNAIVGFGGFIGAG). Over 111–128 (VRAMVYKNYTHDKKKLVH) the chain is Extracellular. The helical transmembrane segment at 129 to 149 (FISLILISMLTGLSLLSLLIV) threads the bilayer. The Cytoplasmic portion of the chain corresponds to 150–161 (FHVFDASLILDK). The helical transmembrane segment at 162–182 (ITWVRWVLYVVSFFLPLFIIY) threads the bilayer. Over 183–200 (SMVRPPDKNNRFVGLYCT) the chain is Extracellular. The helical transmembrane segment at 201–221 (LVSCVEWLAAAVVLYFCGVIV) threads the bilayer. Topologically, residues 222 to 229 (DAHVSFMS) are cytoplasmic. Residues 230–250 (FIAIFIIAALSGLVSFIPGGF) form a helical membrane-spanning segment. Residues 251–271 (GAFDLVVLLGFKTLGVPEEKV) are Extracellular-facing. A helical membrane pass occupies residues 272–292 (LLMLLLYRFAYYFVPVIIALI). The Cytoplasmic portion of the chain corresponds to 293-337 (LSSFEFGTSAKKYIEGSKYFIPAKDVTSFLMSYQKDIIAKIPSLS). A helical transmembrane segment spans residues 338–358 (LAILVFFTSMIFFVNNLTIVY). Topologically, residues 359-369 (DALYDGNHLTY) are extracellular. Residues 370-390 (YILLAIHTSACLLLLLNVVGI) traverse the membrane as a helical segment. The Cytoplasmic segment spans residues 391–394 (YKQS). The next 2 helical transmembrane spans lie at 395 to 415 (RRAI…TFFT) and 416 to 436 (YASY…IVAF). At 437–450 (RRARRLKRPVRMRN) the chain is on the cytoplasmic side. The chain crosses the membrane as a helical span at residues 451–471 (IVAMLLFSLFILYVNHIFIAG). Topologically, residues 472–489 (TLYALDIYTIEMHTSVLR) are extracellular. The chain crosses the membrane as a helical span at residues 490-510 (YYFWLTILIIAIIIGMIAWLF). The Cytoplasmic segment spans residues 511–840 (DYQFSKVRIS…SKVMRVIRHK (330 aa)).

Belongs to the LPG synthase family.

The protein localises to the cell membrane. It carries out the reaction L-lysyl-tRNA(Lys) + a 1,2-diacyl-sn-glycero-3-phospho-(1'-sn-glycerol) = a 1,2-diacyl-sn-glycero-3-phospho-1'-(3'-O-L-lysyl)-sn-glycerol + tRNA(Lys). In terms of biological role, catalyzes the transfer of a lysyl group from L-lysyl-tRNA(Lys) to membrane-bound phosphatidylglycerol (PG), which produces lysylphosphatidylglycerol (LPG), a major component of the bacterial membrane with a positive net charge. LPG synthesis contributes to bacterial virulence as it is involved in the resistance mechanism against cationic antimicrobial peptides (CAMP) produces by the host's immune system (defensins, cathelicidins) and by the competing microorganisms (bacteriocins). In fact, the modification of anionic phosphatidylglycerol with positively charged L-lysine results in repulsion of the peptides. The sequence is that of Phosphatidylglycerol lysyltransferase (mprF) from Staphylococcus aureus (strain COL).